The primary structure comprises 36 residues: GSNGEPGSAGPPGPAGLRGLPGESGAVGPAGPPGSR.

Residues 1-36 (GSNGEPGSAGPPGPAGLRGLPGESGAVGPAGPPGSR) form a disordered region. 2 positions are modified to 4-hydroxyproline: Pro-6 and Pro-12. Over residues 15–29 (AGLRGLPGESGAVGP) the composition is skewed to low complexity. Pro-33 carries the post-translational modification 4-hydroxyproline.

This sequence belongs to the fibrillar collagen family. In terms of assembly, trimers of one alpha 2(I) and two alpha 1(I) chains. Proline residues at the third position of the tripeptide repeating unit (G-X-Y) are hydroxylated in some or all of the chains.

Its subcellular location is the secreted. The protein localises to the extracellular space. It localises to the extracellular matrix. Type I collagen is a member of group I collagen (fibrillar forming collagen). The polypeptide is Collagen alpha-2(I) chain (Brachylophosaurus canadensis (Campanian hadrosaur)).